The sequence spans 129 residues: Profilin-4 (129 aa).

The protein belongs to the profilin family. Expressed in testis, in germ cells in seminiferous tubules (at protein level).

It is found in the cytoplasm. Its function is as follows. Involved in male fertility. Required for manchette development and acrosome biogenesis during spermiogenesis. Binds in vitro to phospholipids, including phosphatidylinositol 3-phosphate (PtdIns(3)P), phosphatidylinositol 4,5-bisphosphate (PtdIns(4,5)P2), phosphatidylinositol 4-phosphate (PtdIns(4)P) and phosphatidic acid (PA). Contrary to other profilin family members, does not bind to actin in vitro. In Mus musculus (Mouse), this protein is Profilin-4 (Pfn4).